Consider the following 297-residue polypeptide: Cell division protein ZipA (297 aa).

A topological domain (periplasmic) is located at residue Met-1. Residues 2 to 22 (EIGLREWLILIGIIVIAGILF) form a helical membrane-spanning segment. Topologically, residues 23–297 (DGWRRMRGGK…FERRALTQKR (275 aa)) are cytoplasmic. The tract at residues 48–150 (DEEGGSAEVL…GAAPASSSVK (103 aa)) is disordered. A compositionally biased stretch (basic and acidic residues) spans 83–92 (ARDREREPKP). The segment covering 124 to 133 (LFADSDDDFA) has biased composition (acidic residues). A compositionally biased stretch (polar residues) spans 136–149 (NNRSSGAAPASSSV).

The protein belongs to the ZipA family. Interacts with FtsZ via their C-terminal domains.

It is found in the cell inner membrane. In terms of biological role, essential cell division protein that stabilizes the FtsZ protofilaments by cross-linking them and that serves as a cytoplasmic membrane anchor for the Z ring. Also required for the recruitment to the septal ring of downstream cell division proteins. The sequence is that of Cell division protein ZipA from Pseudomonas putida (strain ATCC 700007 / DSM 6899 / JCM 31910 / BCRC 17059 / LMG 24140 / F1).